A 355-amino-acid polypeptide reads, in one-letter code: Uroporphyrinogen decarboxylase (355 aa).

Substrate contacts are provided by residues 36 to 40 (RQAGR), aspartate 85, tyrosine 160, serine 215, and histidine 334.

It belongs to the uroporphyrinogen decarboxylase family. Homodimer.

The protein resides in the cytoplasm. The enzyme catalyses uroporphyrinogen III + 4 H(+) = coproporphyrinogen III + 4 CO2. Its pathway is porphyrin-containing compound metabolism; protoporphyrin-IX biosynthesis; coproporphyrinogen-III from 5-aminolevulinate: step 4/4. Functionally, catalyzes the decarboxylation of four acetate groups of uroporphyrinogen-III to yield coproporphyrinogen-III. The protein is Uroporphyrinogen decarboxylase of Rhodococcus erythropolis (strain PR4 / NBRC 100887).